A 508-amino-acid polypeptide reads, in one-letter code: Endo-4-O-sulfatase (508 aa).

The residue at position 84 (serine 84) is a 3-oxoalanine (Ser).

This sequence belongs to the sulfatase family. Post-translationally, the conversion to 3-oxoalanine (also known as C-formylglycine, FGly), of a serine or cysteine residue in prokaryotes and of a cysteine residue in eukaryotes, is critical for catalytic activity.

Functionally, endosulfatase involved in the degradation of the glycosaminoglycans (GAGs) chondroitin sulfate (CS) and dermatan sulfate (DS). Efficiently hydrolyzes sulfate groups from a broad range of substrate size, including disaccharide to high molecular weight CS and DS polymers. Has a strict specificity for the 4-O-sulfate groups of galactosamine. GAG-specific sulfatases play a key role in the persistence of the major human gut symbiont B.thetaiotaomicron in the host gastrointestinal tract. This Bacteroides thetaiotaomicron (strain ATCC 29148 / DSM 2079 / JCM 5827 / CCUG 10774 / NCTC 10582 / VPI-5482 / E50) protein is Endo-4-O-sulfatase.